The chain runs to 1021 residues: PDZ domain-containing protein 7 (1021 aa).

PDZ domains lie at alanine 86 to serine 156 and isoleucine 210 to lysine 279. The span at serine 324–serine 344 shows a compositional bias: low complexity. 3 disordered regions span residues serine 324–aspartate 345, isoleucine 431–serine 495, and arginine 724–arginine 814. Pro residues predominate over residues alanine 729–proline 744. A compositionally biased stretch (polar residues) spans glutamine 758–glutamine 767. The segment covering serine 772 to serine 794 has biased composition (basic residues). The span at proline 799–glycine 808 shows a compositional bias: low complexity. Positions threonine 858–alanine 930 constitute a PDZ 3 domain. The tract at residues glutamine 992–serine 1021 is disordered.

As to quaternary structure, homodimerizes (via PDZ2 domain). Component of USH2 complex, composed of ADGRV1, PDZD7, USH2A and WHRN. Interacts (via PDZ domains) with WHRN; the interaction is direct. Interacts with USH1G. Interacts with ADGRV1 (via the cytoplasmic region). Interacts with USH2A (via the cytoplasmic region). Interacts with MYO7A (via MyTH4-FERM domains). In terms of tissue distribution, isoform 1 is expressed in developing and adult cochlea but not retina. Isoform 2 is expressed in developing and adult cochlea and retina. Isoform 3 is expressed in adult cochlea and retina. Isoform 4 is expressed in retina and developing cochlea but not adult cochlea. Isoform 5 is expressed in adult cochlea but not in developing cochlea or retina.

The protein resides in the cell projection. Its subcellular location is the cilium. It localises to the nucleus. The protein localises to the stereocilium. Functionally, in cochlear developing hair cells, essential in organizing the USH2 complex at stereocilia ankle links. Blocks inhibition of adenylate cyclase activity mediated by ADGRV1. The chain is PDZ domain-containing protein 7 from Mus musculus (Mouse).